The chain runs to 206 residues: Thymidylate kinase (206 aa).

11–18 (GIDGAGKT) lines the ATP pocket.

This sequence belongs to the thymidylate kinase family.

The enzyme catalyses dTMP + ATP = dTDP + ADP. Phosphorylation of dTMP to form dTDP in both de novo and salvage pathways of dTTP synthesis. The chain is Thymidylate kinase from Paraburkholderia phytofirmans (strain DSM 17436 / LMG 22146 / PsJN) (Burkholderia phytofirmans).